Here is a 584-residue protein sequence, read N- to C-terminus: uncharacterized protein (584 aa).

Residues 1 to 27 (MGLSRKKIFTWPLLLTGMAVVSTTFSS) form the signal peptide. Cys28 carries N-palmitoyl cysteine lipidation. The S-diacylglycerol cysteine moiety is linked to residue Cys28. The interval 530–570 (NLPKKEGSTNQANQQTNQTNRSTDATKKDSSSDETNKNPLA) is disordered. Residues 538-552 (TNQANQQTNQTNRST) are compositionally biased toward low complexity. Positions 553 to 565 (DATKKDSSSDETN) are enriched in basic and acidic residues.

This sequence belongs to the MG067/MG068/MG395 family.

The protein resides in the cell membrane. This is an uncharacterized protein from Mycoplasmoides gallisepticum (strain R(low / passage 15 / clone 2)) (Mycoplasma gallisepticum).